The sequence spans 185 residues: Ribosome-recycling factor (185 aa).

It belongs to the RRF family.

It is found in the cytoplasm. Functionally, responsible for the release of ribosomes from messenger RNA at the termination of protein biosynthesis. May increase the efficiency of translation by recycling ribosomes from one round of translation to another. The sequence is that of Ribosome-recycling factor from Thioalkalivibrio sulfidiphilus (strain HL-EbGR7).